The primary structure comprises 74 residues: Protein YkgV (74 aa).

This chain is Protein YkgV, found in Escherichia coli (strain K12).